The chain runs to 188 residues: Calcium load-activated calcium channel (188 aa).

Topologically, residues 1 to 4 are lumenal; that stretch reads MSTM. A helical transmembrane segment spans residues 5 to 32; sequence FADTLLIVFISVCTALLAEGITWVLVYR. Residues 32–89 adopt a coiled-coil conformation; the sequence is RTDKYKRLKAEVEKQSKKLEKKKETITESAGRQQKKKIERQEEKLKNNNRDLSMVRMK. Over 33–86 the chain is Cytoplasmic; the sequence is TDKYKRLKAEVEKQSKKLEKKKETITESAGRQQKKKIERQEEKLKNNNRDLSMV. Serine 60 bears the Phosphoserine mark. The chain crosses the membrane as a helical span at residues 87 to 106; the sequence is RMKSMFAIGFCFTALMGMFN. Topologically, residues 107–120 are lumenal; the sequence is SIFDGRVVAKLPFT. Residues 121–130 lie within the membrane without spanning it; the sequence is PLSYIQGLSH. Over 131-140 the chain is Lumenal; the sequence is RNLLGDDTTD. A helical transmembrane segment spans residues 141-162; it reads CSFIFLYILCTMSIRQNIQKIL. Residues 163–188 lie on the Cytoplasmic side of the membrane; the sequence is GLAPSRAATKQAGGFLGPPPPSGKFS. Serine 188 bears the Phosphoserine mark.

Belongs to the TMCO1 family. Homodimer and homotetramer. Homodimer under resting conditions; forms homotetramers following ER calcium overload. Component of the GET- and EMC-like (GEL) complex, composed of RAB5IF/OPTI and TMCO1. The GEL complex is part of the multi-pass translocon (MPT) complex, composed of three subcomplexes, the GEL complex (composed of RAB5IF/OPTI and TMCO1), the BOS complex (composed of NCLN/Nicalin, NOMO1 and TMEM147) and the PAT complex (composed of WDR83OS/Asterix and CCDC47). The MPT complex associates with the SEC61 complex.

Its subcellular location is the endoplasmic reticulum membrane. It is found in the golgi apparatus membrane. The protein localises to the mitochondrion membrane. The enzyme catalyses Ca(2+)(in) = Ca(2+)(out). Functionally, endoplasmic reticulum (ER) calcium-selective channel preventing intracellular Ca2(+) stores from overfilling and maintaining calcium homeostasis in the ER. In response to endoplasmic reticulum (ER) Ca2(+) overloading, assembles into a homotetramer, forming a functional calcium-selective channel facilitating Ca2(+) release. Mediates ER Ca2(+) homeostasis in osteoblasts and plays a key role in bone formation, via the CaMKII-HDAC4-RUNX2 signaling axis. Component of the multi-pass translocon (MPT) complex that mediates insertion of multi-pass membrane proteins into the lipid bilayer of membranes. The MPT complex takes over after the SEC61 complex: following membrane insertion of the first few transmembrane segments of proteins by the SEC61 complex, the MPT complex occludes the lateral gate of the SEC61 complex to promote insertion of subsequent transmembrane regions. Within the MPT complex, the GEL subcomplex may mediate insertion of transmembrane regions into the membrane. The sequence is that of Calcium load-activated calcium channel from Bos taurus (Bovine).